Reading from the N-terminus, the 122-residue chain is Large ribosomal subunit protein uL14 (122 aa).

The protein belongs to the universal ribosomal protein uL14 family. Part of the 50S ribosomal subunit. Forms a cluster with proteins L3 and L19. In the 70S ribosome, L14 and L19 interact and together make contacts with the 16S rRNA in bridges B5 and B8.

In terms of biological role, binds to 23S rRNA. Forms part of two intersubunit bridges in the 70S ribosome. The polypeptide is Large ribosomal subunit protein uL14 (Clostridium kluyveri (strain ATCC 8527 / DSM 555 / NBRC 12016 / NCIMB 10680 / K1)).